The chain runs to 121 residues: Large ribosomal subunit protein uL22 (121 aa).

This sequence belongs to the universal ribosomal protein uL22 family. Part of the 50S ribosomal subunit.

Its function is as follows. This protein binds specifically to 23S rRNA; its binding is stimulated by other ribosomal proteins, e.g. L4, L17, and L20. It is important during the early stages of 50S assembly. It makes multiple contacts with different domains of the 23S rRNA in the assembled 50S subunit and ribosome. In terms of biological role, the globular domain of the protein is located near the polypeptide exit tunnel on the outside of the subunit, while an extended beta-hairpin is found that lines the wall of the exit tunnel in the center of the 70S ribosome. The polypeptide is Large ribosomal subunit protein uL22 (Synechococcus sp. (strain CC9902)).